The sequence spans 484 residues: Bifunctional protein GlmU (484 aa).

The interval 1-240 is pyrophosphorylase; that stretch reads MSASRPAAVM…RTEVEGVNDR (240 aa). UDP-N-acetyl-alpha-D-glucosamine is bound by residues 12 to 15, K26, Q79, and 84 to 85; these read LAAG and GT. D113 contributes to the Mg(2+) binding site. UDP-N-acetyl-alpha-D-glucosamine-binding residues include G150, E165, N180, and N238. Position 238 (N238) interacts with Mg(2+). A linker region spans residues 241–261; the sequence is VQLAEARRLLNARLLEQLMRD. The segment at 262 to 484 is N-acetyltransferase; that stretch reads GVTVVDPAST…RARARSEEDR (223 aa). R343 and K361 together coordinate UDP-N-acetyl-alpha-D-glucosamine. H373 functions as the Proton acceptor in the catalytic mechanism. Y376 and N387 together coordinate UDP-N-acetyl-alpha-D-glucosamine. Acetyl-CoA-binding positions include A390, 396–397, S415, and A433; that span reads NY. Positions 457–484 are disordered; that stretch reads EGWVERKRPGTPAAQAAERARARSEEDR. A compositionally biased stretch (basic and acidic residues) spans 474–484; it reads ERARARSEEDR.

It in the N-terminal section; belongs to the N-acetylglucosamine-1-phosphate uridyltransferase family. In the C-terminal section; belongs to the transferase hexapeptide repeat family. In terms of assembly, homotrimer. The cofactor is Mg(2+).

It is found in the cytoplasm. It catalyses the reaction alpha-D-glucosamine 1-phosphate + acetyl-CoA = N-acetyl-alpha-D-glucosamine 1-phosphate + CoA + H(+). It carries out the reaction N-acetyl-alpha-D-glucosamine 1-phosphate + UTP + H(+) = UDP-N-acetyl-alpha-D-glucosamine + diphosphate. It functions in the pathway nucleotide-sugar biosynthesis; UDP-N-acetyl-alpha-D-glucosamine biosynthesis; N-acetyl-alpha-D-glucosamine 1-phosphate from alpha-D-glucosamine 6-phosphate (route II): step 2/2. Its pathway is nucleotide-sugar biosynthesis; UDP-N-acetyl-alpha-D-glucosamine biosynthesis; UDP-N-acetyl-alpha-D-glucosamine from N-acetyl-alpha-D-glucosamine 1-phosphate: step 1/1. The protein operates within bacterial outer membrane biogenesis; LPS lipid A biosynthesis. In terms of biological role, catalyzes the last two sequential reactions in the de novo biosynthetic pathway for UDP-N-acetylglucosamine (UDP-GlcNAc). The C-terminal domain catalyzes the transfer of acetyl group from acetyl coenzyme A to glucosamine-1-phosphate (GlcN-1-P) to produce N-acetylglucosamine-1-phosphate (GlcNAc-1-P), which is converted into UDP-GlcNAc by the transfer of uridine 5-monophosphate (from uridine 5-triphosphate), a reaction catalyzed by the N-terminal domain. The polypeptide is Bifunctional protein GlmU (Thermobifida fusca (strain YX)).